We begin with the raw amino-acid sequence, 314 residues long: MSTEVVEEFDADYTGRHFLSVEDMSSDDVMRIIERGRQFKAGDAPRVEPGHVAINMFFENSTRTMTSFQMAEHRLGMKILDFDPGHSSVTKGESLYDSVRTVDAIGAEVAVIRHSTNHYYDYLLATGMLGLSVVNGGDGSGQHPSQCMLDLMTIAEEFGHVDGLTVAISGDIVHSRVARSDAQILTRLGANVVFTGPREWMDHDVTRLGTMATLDEVIADVDVAMMLRVQHERFDAGPDFSATDYLHTFGLTDERAERMKPHAIIMHPAPVNRGCEISGHLVEAPSSRIFEQMGNGVMVRMAILEQVLHGRETK.

Positions 63 and 64 each coordinate carbamoyl phosphate. Lysine 91 contributes to the L-aspartate binding site. Carbamoyl phosphate contacts are provided by arginine 113, histidine 143, and glutamine 146. Arginine 176 and arginine 228 together coordinate L-aspartate. Positions 269 and 270 each coordinate carbamoyl phosphate.

The protein belongs to the aspartate/ornithine carbamoyltransferase superfamily. ATCase family. In terms of assembly, heterododecamer (2C3:3R2) of six catalytic PyrB chains organized as two trimers (C3), and six regulatory PyrI chains organized as three dimers (R2).

The catalysed reaction is carbamoyl phosphate + L-aspartate = N-carbamoyl-L-aspartate + phosphate + H(+). Its pathway is pyrimidine metabolism; UMP biosynthesis via de novo pathway; (S)-dihydroorotate from bicarbonate: step 2/3. Functionally, catalyzes the condensation of carbamoyl phosphate and aspartate to form carbamoyl aspartate and inorganic phosphate, the committed step in the de novo pyrimidine nucleotide biosynthesis pathway. This Cutibacterium acnes (strain DSM 16379 / KPA171202) (Propionibacterium acnes) protein is Aspartate carbamoyltransferase catalytic subunit.